The sequence spans 461 residues: Asparagine--tRNA ligase (461 aa).

It belongs to the class-II aminoacyl-tRNA synthetase family. Homodimer.

Its subcellular location is the cytoplasm. The catalysed reaction is tRNA(Asn) + L-asparagine + ATP = L-asparaginyl-tRNA(Asn) + AMP + diphosphate + H(+). The polypeptide is Asparagine--tRNA ligase (Oleidesulfovibrio alaskensis (strain ATCC BAA-1058 / DSM 17464 / G20) (Desulfovibrio alaskensis)).